A 213-amino-acid polypeptide reads, in one-letter code: Probable anti-sigma-F factor NrsF (213 aa).

Transmembrane regions (helical) follow at residues 27–47 (ALAI…LLQV), 51–71 (LGLA…TCLA), 91–111 (VPAA…FTLI), 126–146 (TWKS…AAVL), 159–179 (LAGF…YCLH), and 187–207 (FIGF…VLLG).

Belongs to the NrsF anti-sigma-F factor family.

It is found in the cell inner membrane. Its function is as follows. Probably an anti-sigma factor for extracytoplasmic function (ECF) sigma factor sigma-F (SigF), which responds to (hypo)chlorite. ECF sigma factors are held in an inactive form by a cognate anti-sigma factor. This chain is Probable anti-sigma-F factor NrsF, found in Azospira oryzae (strain ATCC BAA-33 / DSM 13638 / PS) (Dechlorosoma suillum).